A 180-amino-acid chain; its full sequence is Pro-glucagon (180 aa).

The N-terminal stretch at 1-20 is a signal peptide; the sequence is MKSVYFVAGLFIMLAQGSWQ. Residues 23–58 are disordered; it reads LQDTEEKPRSVSASQTDMLDDPDQMNEDKRHSQGTF. The residue at position 54 (Ser-54) is a Phosphoserine. Residues 84–89 constitute a propeptide that is removed on maturation; the sequence is NRNNIA. Phosphoserine occurs at positions 105 and 108. At Arg-127 the chain carries Arginine amide. Positions 131–145 are excised as a propeptide; sequence DFPEEVAIVEELGRR. Residues Ser-150 and Ser-152 each carry the phosphoserine modification.

It belongs to the glucagon family. Proglucagon is post-translationally processed in a tissue-specific manner in pancreatic A cells and intestinal L cells. In pancreatic A cells, the major bioactive hormone is glucagon cleaved by PCSK2/PC2. In the intestinal L cells PCSK1/PC1 liberates GLP-1, GLP-2, glicentin and oxyntomodulin. GLP-1 is further N-terminally truncated by post-translational processing in the intestinal L cells resulting in GLP-1(7-37) GLP-1-(7-36)amide. The C-terminal amidation is neither important for the metabolism of GLP-1 nor for its effects on the endocrine pancreas.

The protein localises to the secreted. Plays a key role in glucose metabolism and homeostasis. Regulates blood glucose by increasing gluconeogenesis and decreasing glycolysis. A counterregulatory hormone of insulin, raises plasma glucose levels in response to insulin-induced hypoglycemia. Plays an important role in initiating and maintaining hyperglycemic conditions in diabetes. In terms of biological role, potent stimulator of glucose-dependent insulin release. Also stimulates insulin release in response to IL6. Plays important roles on gastric motility and the suppression of plasma glucagon levels. May be involved in the suppression of satiety and stimulation of glucose disposal in peripheral tissues, independent of the actions of insulin. Has growth-promoting activities on intestinal epithelium. May also regulate the hypothalamic pituitary axis (HPA) via effects on LH, TSH, CRH, oxytocin, and vasopressin secretion. Increases islet mass through stimulation of islet neogenesis and pancreatic beta cell proliferation. Inhibits beta cell apoptosis. Functionally, stimulates intestinal growth and up-regulates villus height in the small intestine, concomitant with increased crypt cell proliferation and decreased enterocyte apoptosis. The gastrointestinal tract, from the stomach to the colon is the principal target for GLP-2 action. Plays a key role in nutrient homeostasis, enhancing nutrient assimilation through enhanced gastrointestinal function, as well as increasing nutrient disposal. Stimulates intestinal glucose transport and decreases mucosal permeability. Its function is as follows. Significantly reduces food intake. Inhibits gastric emptying in humans. Suppression of gastric emptying may lead to increased gastric distension, which may contribute to satiety by causing a sensation of fullness. May modulate gastric acid secretion and the gastro-pyloro-duodenal activity. May play an important role in intestinal mucosal growth in the early period of life. The polypeptide is Pro-glucagon (GCG) (Cavia porcellus (Guinea pig)).